We begin with the raw amino-acid sequence, 152 residues long: Lipoprotein signal peptidase (152 aa).

2 helical membrane passes run 55-75 (NGRW…LYYL) and 87-107 (VALG…IATG). Residues aspartate 111 and aspartate 129 contribute to the active site. Residues 125-145 (FNVADICVTVGVGLLFLHLVL) form a helical membrane-spanning segment.

Belongs to the peptidase A8 family.

The protein localises to the cell membrane. The enzyme catalyses Release of signal peptides from bacterial membrane prolipoproteins. Hydrolyzes -Xaa-Yaa-Zaa-|-(S,diacylglyceryl)Cys-, in which Xaa is hydrophobic (preferably Leu), and Yaa (Ala or Ser) and Zaa (Gly or Ala) have small, neutral side chains.. It functions in the pathway protein modification; lipoprotein biosynthesis (signal peptide cleavage). Functionally, this protein specifically catalyzes the removal of signal peptides from prolipoproteins. The polypeptide is Lipoprotein signal peptidase (Symbiobacterium thermophilum (strain DSM 24528 / JCM 14929 / IAM 14863 / T)).